A 401-amino-acid chain; its full sequence is Methyltransferase cfoC (401 aa).

Asp-268 is a binding site for S-adenosyl-L-methionine. His-308 serves as the catalytic Proton acceptor.

This sequence belongs to the class I-like SAM-binding methyltransferase superfamily. Cation-independent O-methyltransferase family.

It functions in the pathway secondary metabolite biosynthesis; flavonoid biosynthesis. Functionally, methyltransferase; part of the gene cluster that mediates the biosynthesis of chlorflavonin, a fungal flavonoid with acetolactate synthase inhibitory activity. Within the pathway, cfoC is responsible for the methylation at position C8-OH of flavonoid. The pathway begins with the PKS-NRPS hybrid synthetase cfoA that uses benzoic acid or p-hydroxybenzoic acid as a starter unit with four rounds of chain elongation using malonyl-CoA to form the chalcone skeleton. Then, a new type of chalcone isomerase, cfoK, catalyzes the conversion of the chalcone into a flavanone by a histidine-mediated oxa-Michael addition mechanism. The desaturation of flavanone to flavone is catalyzed by a new type of flavone synthase, the flavin mononucleotide (FMN)-dependent oxidoreductase cfoJ. Monooxygenases cfoF, cfoG, and P450 cfoH are responsible for the hydroxylation of the flavonoid skeleton at sites C3, C8, and C2', respectively. Like cfoF, the dehydratase cfoI also plays a role in the hydroxylation of position C3. Methyltransferases cfoB, cfoC, and cfoD then catalyze the methylation of C7-OH, C8-OH, and C3-OH, respectively. Finally, the monooxygenase cfoE is responsible for the chlorination of flavonoid at position C3'. This Aspergillus candidus protein is Methyltransferase cfoC.